The sequence spans 95 residues: Exodeoxyribonuclease 7 small subunit (95 aa).

The disordered stretch occupies residues 65–95; that stretch reads ETINPAETARPAKPENAPESPRMNDLFGTES.

Belongs to the XseB family. Heterooligomer composed of large and small subunits.

The protein localises to the cytoplasm. The enzyme catalyses Exonucleolytic cleavage in either 5'- to 3'- or 3'- to 5'-direction to yield nucleoside 5'-phosphates.. Its function is as follows. Bidirectionally degrades single-stranded DNA into large acid-insoluble oligonucleotides, which are then degraded further into small acid-soluble oligonucleotides. The protein is Exodeoxyribonuclease 7 small subunit of Chlorobaculum tepidum (strain ATCC 49652 / DSM 12025 / NBRC 103806 / TLS) (Chlorobium tepidum).